The chain runs to 146 residues: Hemoglobin subunit beta-2 (146 aa).

The Globin domain maps to 2 to 146 (KWTDKERAVI…VVSALGKQYC (145 aa)). His-63 and His-92 together coordinate heme b.

The protein belongs to the globin family. In terms of assembly, heterotetramer of two alpha chains and two beta chains. Red blood cells.

Functionally, involved in oxygen transport from gills to the various peripheral tissues. The chain is Hemoglobin subunit beta-2 (hbb2) from Lycodes reticulatus (Arctic eelpout).